Reading from the N-terminus, the 561-residue chain is Dihydroxy-acid dehydratase 2 (561 aa).

[2Fe-2S] cluster is bound at residue cysteine 53. Mg(2+) is bound at residue aspartate 85. [2Fe-2S] cluster is bound at residue cysteine 126. Residues aspartate 127 and lysine 128 each coordinate Mg(2+). Lysine 128 is modified (N6-carboxylysine). A [2Fe-2S] cluster-binding site is contributed by cysteine 195. Glutamate 446 is a Mg(2+) binding site. Serine 472 functions as the Proton acceptor in the catalytic mechanism.

The protein belongs to the IlvD/Edd family. In terms of assembly, homodimer. Requires [2Fe-2S] cluster as cofactor. The cofactor is Mg(2+).

It catalyses the reaction (2R)-2,3-dihydroxy-3-methylbutanoate = 3-methyl-2-oxobutanoate + H2O. The enzyme catalyses (2R,3R)-2,3-dihydroxy-3-methylpentanoate = (S)-3-methyl-2-oxopentanoate + H2O. The protein operates within amino-acid biosynthesis; L-isoleucine biosynthesis; L-isoleucine from 2-oxobutanoate: step 3/4. Its pathway is amino-acid biosynthesis; L-valine biosynthesis; L-valine from pyruvate: step 3/4. Functionally, functions in the biosynthesis of branched-chain amino acids. Catalyzes the dehydration of (2R,3R)-2,3-dihydroxy-3-methylpentanoate (2,3-dihydroxy-3-methylvalerate) into 2-oxo-3-methylpentanoate (2-oxo-3-methylvalerate) and of (2R)-2,3-dihydroxy-3-methylbutanoate (2,3-dihydroxyisovalerate) into 2-oxo-3-methylbutanoate (2-oxoisovalerate), the penultimate precursor to L-isoleucine and L-valine, respectively. The sequence is that of Dihydroxy-acid dehydratase 2 from Acinetobacter baylyi (strain ATCC 33305 / BD413 / ADP1).